Consider the following 159-residue polypeptide: ATP synthase subunit b 2 (159 aa).

A helical transmembrane segment spans residues 1–21; it reads MDATFWAFIALVIFVAIVVYM.

The protein belongs to the ATPase B chain family. F-type ATPases have 2 components, F(1) - the catalytic core - and F(0) - the membrane proton channel. F(1) has five subunits: alpha(3), beta(3), gamma(1), delta(1), epsilon(1). F(0) has three main subunits: a(1), b(2) and c(10-14). The alpha and beta chains form an alternating ring which encloses part of the gamma chain. F(1) is attached to F(0) by a central stalk formed by the gamma and epsilon chains, while a peripheral stalk is formed by the delta and b chains.

Its subcellular location is the cell inner membrane. In terms of biological role, f(1)F(0) ATP synthase produces ATP from ADP in the presence of a proton or sodium gradient. F-type ATPases consist of two structural domains, F(1) containing the extramembraneous catalytic core and F(0) containing the membrane proton channel, linked together by a central stalk and a peripheral stalk. During catalysis, ATP synthesis in the catalytic domain of F(1) is coupled via a rotary mechanism of the central stalk subunits to proton translocation. Functionally, component of the F(0) channel, it forms part of the peripheral stalk, linking F(1) to F(0). In Brucella abortus (strain S19), this protein is ATP synthase subunit b 2.